The chain runs to 314 residues: tRNA N6-adenosine threonylcarbamoyltransferase (314 aa).

His-106, His-110, and Tyr-127 together coordinate Fe cation. Substrate contacts are provided by residues 127–131 (YVSGA), Asp-159, Gly-172, Glu-176, and Asn-255. Position 283 (Asp-283) interacts with Fe cation.

The protein belongs to the KAE1 / TsaD family. It depends on Fe(2+) as a cofactor.

It is found in the cytoplasm. The enzyme catalyses L-threonylcarbamoyladenylate + adenosine(37) in tRNA = N(6)-L-threonylcarbamoyladenosine(37) in tRNA + AMP + H(+). In terms of biological role, required for the formation of a threonylcarbamoyl group on adenosine at position 37 (t(6)A37) in tRNAs that read codons beginning with adenine. Is probably involved in the transfer of the threonylcarbamoyl moiety of threonylcarbamoyl-AMP (TC-AMP) to the N6 group of A37. The polypeptide is tRNA N6-adenosine threonylcarbamoyltransferase (Nanoarchaeum equitans (strain Kin4-M)).